We begin with the raw amino-acid sequence, 156 residues long: Small ribosomal subunit protein uS7 (156 aa).

This sequence belongs to the universal ribosomal protein uS7 family. As to quaternary structure, part of the 30S ribosomal subunit. Contacts proteins S9 and S11.

One of the primary rRNA binding proteins, it binds directly to 16S rRNA where it nucleates assembly of the head domain of the 30S subunit. Is located at the subunit interface close to the decoding center, probably blocks exit of the E-site tRNA. The protein is Small ribosomal subunit protein uS7 of Trichlorobacter lovleyi (strain ATCC BAA-1151 / DSM 17278 / SZ) (Geobacter lovleyi).